The sequence spans 282 residues: Shikimate dehydrogenase (NADP(+)) (282 aa).

Residues 18–20 (SRS) and T65 contribute to the shikimate site. K69 functions as the Proton acceptor in the catalytic mechanism. The shikimate site is built by N90 and D106. Residues 134 to 138 (GAGGA), 158 to 163 (NRTAAR), and I223 contribute to the NADP(+) site. Shikimate is bound at residue Y225. NADP(+) is bound at residue G246.

The protein belongs to the shikimate dehydrogenase family. Homodimer.

It carries out the reaction shikimate + NADP(+) = 3-dehydroshikimate + NADPH + H(+). Its pathway is metabolic intermediate biosynthesis; chorismate biosynthesis; chorismate from D-erythrose 4-phosphate and phosphoenolpyruvate: step 4/7. Functionally, involved in the biosynthesis of the chorismate, which leads to the biosynthesis of aromatic amino acids. Catalyzes the reversible NADPH linked reduction of 3-dehydroshikimate (DHSA) to yield shikimate (SA). In Methylobacterium radiotolerans (strain ATCC 27329 / DSM 1819 / JCM 2831 / NBRC 15690 / NCIMB 10815 / 0-1), this protein is Shikimate dehydrogenase (NADP(+)).